The sequence spans 201 residues: ATP-dependent Clp protease proteolytic subunit (201 aa).

Residue Ser-98 is the Nucleophile of the active site. His-123 is an active-site residue.

This sequence belongs to the peptidase S14 family. In terms of assembly, fourteen ClpP subunits assemble into 2 heptameric rings which stack back to back to give a disk-like structure with a central cavity, resembling the structure of eukaryotic proteasomes.

The protein resides in the cytoplasm. It catalyses the reaction Hydrolysis of proteins to small peptides in the presence of ATP and magnesium. alpha-casein is the usual test substrate. In the absence of ATP, only oligopeptides shorter than five residues are hydrolyzed (such as succinyl-Leu-Tyr-|-NHMec, and Leu-Tyr-Leu-|-Tyr-Trp, in which cleavage of the -Tyr-|-Leu- and -Tyr-|-Trp bonds also occurs).. Cleaves peptides in various proteins in a process that requires ATP hydrolysis. Has a chymotrypsin-like activity. Plays a major role in the degradation of misfolded proteins. The sequence is that of ATP-dependent Clp protease proteolytic subunit from Rickettsia peacockii (strain Rustic).